The primary structure comprises 187 residues: Proenkephalin-A (187 aa).

4 propeptides span residues 52-70 (MDEL…EILA), 80-143 (DAEE…KMLQ), 153-163 (VGRPEWWMDYQ), and 173-187 (FADS…ESYS). Residues 81–132 (AEEEEDALASSSDLLKELLGPGETETAAAPRGRDDEDVSKSHGGFMRALKGS) are disordered. Residues 88–99 (LASSSDLLKELL) show a composition bias toward low complexity. Basic and acidic residues predominate over residues 111–120 (RGRDDEDVSK). Ser-187 is subject to Phosphoserine.

The protein belongs to the opioid neuropeptide precursor family. In terms of processing, processed and degraded by ACE. The N-terminal domain contains 6 conserved cysteines thought to be involved in disulfide bonding and/or processing. Post-translationally, proenkephalin-A is cleaved by CTSL to generate Met-enkephalin.

The protein localises to the cytoplasmic vesicle. The protein resides in the secretory vesicle. It localises to the chromaffin granule lumen. Its subcellular location is the secreted. Its function is as follows. Neuropeptide that competes with and mimic the effects of opiate drugs. They play a role in a number of physiologic functions, including pain perception and responses to stress. The polypeptide is Proenkephalin-A (PENK) (Felis catus (Cat)).